We begin with the raw amino-acid sequence, 63 residues long: Bowman-birk type proteinase inhibitor 2 (63 aa).

7 disulfide bridges follow: Cys-7-Cys-61, Cys-8-Cys-23, Cys-11-Cys-57, Cys-13-Cys-21, Cys-31-Cys-38, Cys-35-Cys-50, and Cys-40-Cys-48.

Belongs to the Bowman-Birk serine protease inhibitor family. In terms of assembly, exists as a dimer in its native form.

Its function is as follows. Inhibits trypsin, chymotrypsin, plasmin and factor XIIa. Does not inhibit factor Xa, thrombin, human plasma kallikrein, porcine pancreatic kallikrein and human urinary kallikrein. The chain is Bowman-birk type proteinase inhibitor 2 from Amburana cearensis (Cerejeira).